The primary structure comprises 93 residues: MAAVAAEQKKVVVHFRSTGNAPQLKQSKFKIGGNEKFLKIIDFLRRQIHQDTVFLYVNSAFSPNPDELIIDLYNNFGIDGQLVVNYASSMAWG.

Residue G93 forms a Glycyl lysine isopeptide (Gly-Lys) (interchain with K-138 in ATG5) linkage.

This sequence belongs to the ATG12 family.

It localises to the cytoplasm. Ubiquitin-like protein involved in cytoplasm to vacuole transport (Cvt) and autophagy vesicles formation. Conjugation with ATG5 through a ubiquitin-like conjugating system is essential for its function. ATG12/ATG5 conjugate has an essential role in plant nutrient recycling. This Oryza sativa subsp. indica (Rice) protein is Ubiquitin-like protein ATG12 (ATG12).